We begin with the raw amino-acid sequence, 109 residues long: UPF0060 membrane protein PCC8801_1733 (109 aa).

Helical transmembrane passes span 7–27, 36–56, 58–78, and 87–107; these read LLYF…VWLW, YALL…LQTA, FGRV…LWGW, and SYDW…MYAP.

The protein belongs to the UPF0060 family.

It is found in the cell inner membrane. This chain is UPF0060 membrane protein PCC8801_1733, found in Rippkaea orientalis (strain PCC 8801 / RF-1) (Cyanothece sp. (strain PCC 8801)).